Reading from the N-terminus, the 360-residue chain is Protein Wnt-2 (360 aa).

A signal peptide spans 1 to 25; that stretch reads MNAPVGGIWLWLPLLLTWLSPEVSS. 11 disulfides stabilise this stretch: Cys76/Cys87, Cys127/Cys135, Cys137/Cys157, Cys206/Cys220, Cys208/Cys215, Cys278/Cys309, Cys294/Cys304, Cys308/Cys348, Cys324/Cys339, Cys326/Cys336, and Cys331/Cys332. Ser212 carries O-palmitoleoyl serine; by PORCN lipidation. Residue Asn295 is glycosylated (N-linked (GlcNAc...) asparagine).

Belongs to the Wnt family. In terms of processing, palmitoleoylation is required for efficient binding to frizzled receptors. Depalmitoleoylation leads to Wnt signaling pathway inhibition.

It is found in the secreted. It localises to the extracellular space. Its subcellular location is the extracellular matrix. Ligand for members of the frizzled family of seven transmembrane receptors. Probable developmental protein. May be a signaling molecule which affects the development of discrete regions of tissues. Is likely to signal over only few cell diameters. This chain is Protein Wnt-2 (WNT2), found in Rhinolophus ferrumequinum (Greater horseshoe bat).